We begin with the raw amino-acid sequence, 504 residues long: ATP synthase subunit alpha, chloroplastic (504 aa).

170 to 177 (GDRQTGKT) provides a ligand contact to ATP.

This sequence belongs to the ATPase alpha/beta chains family. F-type ATPases have 2 components, CF(1) - the catalytic core - and CF(0) - the membrane proton channel. CF(1) has five subunits: alpha(3), beta(3), gamma(1), delta(1), epsilon(1). CF(0) has four main subunits: a, b, b' and c.

The protein localises to the plastid. The protein resides in the chloroplast thylakoid membrane. It carries out the reaction ATP + H2O + 4 H(+)(in) = ADP + phosphate + 5 H(+)(out). Its function is as follows. Produces ATP from ADP in the presence of a proton gradient across the membrane. The alpha chain is a regulatory subunit. In Cyanidium caldarium (Red alga), this protein is ATP synthase subunit alpha, chloroplastic.